Here is a 101-residue protein sequence, read N- to C-terminus: Small ribosomal subunit protein uS14 (101 aa).

This sequence belongs to the universal ribosomal protein uS14 family. In terms of assembly, part of the 30S ribosomal subunit. Contacts proteins S3 and S10.

Functionally, binds 16S rRNA, required for the assembly of 30S particles and may also be responsible for determining the conformation of the 16S rRNA at the A site. The sequence is that of Small ribosomal subunit protein uS14 from Corynebacterium efficiens (strain DSM 44549 / YS-314 / AJ 12310 / JCM 11189 / NBRC 100395).